The primary structure comprises 994 residues: MPRRQILSSEEQERLLVIPDDEIILTRMCFLNEQDIALINKHRRPANRLGFAVLLCYLRGPGFIPDKSNVPHSSVISRIASRLKLQPDLWPEYASREQTRWEHLTELYRYLKLSPFSRSLQKDCIRHLHPYAMRTDKGFMLAEEMLNWLHSNNVIFPSVDVIERTLAEAVTLADRAVFSALTAQLEKQHKSALDSLLKSEGEQASRLAWLLQPPGKINGKNVLQHIDRLNSIAALGLPDGITLSIHQNRLLKLAREGRKMSSRDLAKFTDVRRYATLVCVIQEAQATLTDEVIELHERILGTLFSRAKRTQAERLQLTGKLIQSKLKQYVTVGQALLHARESGEDPWAAIEDVLPWQEFINSLEETQFLSRKGNFDPLHLITEKYSTLRKYAPRMLSALQFIATPPAQTLSDALDTIRDMYRKQLRKVPPAAPTGFIPESWRKLVLTPSGIDRKYYEFCVMNELKGALRSGDIWVKGSRRYRNFDDYLIPAAEFEKSRHNDQLQLAVQTDCRAYLQARMTLLASRLEEVNAMALAGDLPDVDISDKGVKITPLENSVPSGASPFADLVYGMLPHPKITEILEEVDNWTGFTRHFAHLKNNNVRPKDGRLLLTTILADGINLGLTKMAESCPGATKSSLEGIQAWYIRDETYSAALAELVNAQKARPLAAFWGDGTTSSSDGQNFRVGSHGRYAGQVNLKYGQEPGVQIYTHISDQYSPFYAKVISRVRDSTHVLDGLLYHESDLEITEHYTDTAGFTEHVFALMHLLGFAFAPRIRDLHDKRLFIHGKAERYPGLQSVISTTSLNIKDIEAHWDEILRLAASIKQGTVTASLMIKKLASYPKQNGLAKALREIGRIERTLFMLDWFRDPGLRRRVQAGLNKGEARNALARAVFMHRLGEIRDRGLENQSYRASGLTLLTAAITLWNTVYIERAIESLKRKGIPINNQLVSHLSPLGWEHINLSGDYVWRNNIKLGSGKYRSLRTVDTELYKKQS.

The protein belongs to the transposase 7 family.

Required for transposition of transposon Tn2501. The polypeptide is Transposase for transposon Tn2501 (tnpA) (Escherichia coli).